The following is a 110-amino-acid chain: Hydrogenase maturation factor HypA (110 aa).

His-2 is a Ni(2+) binding site. Residues Cys-73, Cys-76, Cys-87, and Cys-89 each contribute to the Zn(2+) site.

The protein belongs to the HypA/HybF family.

Functionally, involved in the maturation of [NiFe] hydrogenases. Required for nickel insertion into the metal center of the hydrogenase. The sequence is that of Hydrogenase maturation factor HypA from Archaeoglobus fulgidus (strain ATCC 49558 / DSM 4304 / JCM 9628 / NBRC 100126 / VC-16).